The following is a 446-amino-acid chain: Maltoporin (446 aa).

Positions 1-25 are cleaved as a signal peptide; it reads MMITLRKLPLAVAVAAGVMSAQAMA.

This sequence belongs to the porin LamB (TC 1.B.3) family. Homotrimer formed of three 18-stranded antiparallel beta-barrels, containing three independent channels.

It localises to the cell outer membrane. The enzyme catalyses beta-maltose(in) = beta-maltose(out). Functionally, involved in the transport of maltose and maltodextrins. This Escherichia coli O7:K1 (strain IAI39 / ExPEC) protein is Maltoporin.